The chain runs to 365 residues: UDP-galactose transporter homolog 1 (365 aa).

Transmembrane regions (helical) follow at residues 42-62 and 80-100; these read IIDL…WAVL and ASLV…YAYL. Asn-115 is a glycosylation site (N-linked (GlcNAc...) asparagine). The next 2 membrane-spanning stretches (helical) occupy residues 182-202 and 206-226; these read YAVV…HAAP and SGAG…SMLL. N-linked (GlcNAc...) asparagine glycosylation occurs at Asn-231. Transmembrane regions (helical) follow at residues 249-269, 289-309, 315-335, and 339-359; these read VMCG…LTFS, DIVL…QTLE, VLVT…VVWF, and LTLG…FEAW.

This sequence belongs to the nucleotide-sugar transporter family. SLC35B subfamily.

It is found in the endoplasmic reticulum membrane. Functionally, may be involved in specific transport of UDP-Gal from the cytosol to the Golgi lumen. Involved in the maintenance of optimal conditions for the folding of secretory pathway proteins in the endoplasmic reticulum. The chain is UDP-galactose transporter homolog 1 (HUT1) from Yarrowia lipolytica (strain CLIB 122 / E 150) (Yeast).